The following is a 373-amino-acid chain: Type II secretion system protein L (373 aa).

The Cytoplasmic segment spans residues 1 to 214 (MTAWRDTLGR…RRSDPMQRWN (214 aa)). A helical membrane pass occupies residues 215-233 (LLLAVAALVLLAVAGWLLL). Residues 234–373 (DNRRQAADDL…AKEAADAAQR (140 aa)) are Periplasmic-facing.

This sequence belongs to the GSP L family. As to quaternary structure, type II secretion system is composed of four main components: the outer membrane complex, the inner membrane complex, the cytoplasmic secretion ATPase and the periplasm-spanning pseudopilus. Forms homodimers. Interacts with XpsM/GspM. Interacts with XpsE/GspE and XpsF/GspF.

The protein localises to the cell inner membrane. In terms of biological role, inner membrane component of the type II secretion system required for the energy-dependent secretion of extracellular factors such as proteases and toxins from the periplasm. Plays a role in the complex assembly and recruits XpsM resulting in a stable complex in the inner membrane. Provides thus a link between the energy-providing XpsE protein in the cytoplasm and the rest of the T2SS machinery. The polypeptide is Type II secretion system protein L (pefL) (Xanthomonas campestris pv. campestris (strain ATCC 33913 / DSM 3586 / NCPPB 528 / LMG 568 / P 25)).